The primary structure comprises 224 residues: Holliday junction branch migration complex subunit RuvA (224 aa).

The interval 1–64 (MIGKVAGILD…EDLLQLFGFP (64 aa)) is domain I. The segment at 65 to 143 (TMIEKEWHRL…ALMAMGGGTA (79 aa)) is domain II. Positions 141–185 (GTAALAPSEPPEPQPGTSSGSRRKTRAPEPPRPSHTADALSALAN) are disordered. The interval 144-170 (ALAPSEPPEPQPGTSSGSRRKTRAPEP) is flexible linker. Positions 171 to 224 (PRPSHTADALSALANLGYQPTDAAQAVAQAAGESPDADTAALIRAALKLLAPKS) are domain III.

The protein belongs to the RuvA family. As to quaternary structure, homotetramer. Forms an RuvA(8)-RuvB(12)-Holliday junction (HJ) complex. HJ DNA is sandwiched between 2 RuvA tetramers; dsDNA enters through RuvA and exits via RuvB. An RuvB hexamer assembles on each DNA strand where it exits the tetramer. Each RuvB hexamer is contacted by two RuvA subunits (via domain III) on 2 adjacent RuvB subunits; this complex drives branch migration. In the full resolvosome a probable DNA-RuvA(4)-RuvB(12)-RuvC(2) complex forms which resolves the HJ.

It localises to the cytoplasm. The RuvA-RuvB-RuvC complex processes Holliday junction (HJ) DNA during genetic recombination and DNA repair, while the RuvA-RuvB complex plays an important role in the rescue of blocked DNA replication forks via replication fork reversal (RFR). RuvA specifically binds to HJ cruciform DNA, conferring on it an open structure. The RuvB hexamer acts as an ATP-dependent pump, pulling dsDNA into and through the RuvAB complex. HJ branch migration allows RuvC to scan DNA until it finds its consensus sequence, where it cleaves and resolves the cruciform DNA. The protein is Holliday junction branch migration complex subunit RuvA of Cereibacter sphaeroides (strain KD131 / KCTC 12085) (Rhodobacter sphaeroides).